We begin with the raw amino-acid sequence, 75 residues long: UPF0291 protein Teth39_0326 (75 aa).

This sequence belongs to the UPF0291 family.

It localises to the cytoplasm. The chain is UPF0291 protein Teth39_0326 from Thermoanaerobacter pseudethanolicus (strain ATCC 33223 / 39E) (Clostridium thermohydrosulfuricum).